The following is a 519-amino-acid chain: Cell division cycle protein 20 homolog B (519 aa).

Over residues 79–98 (QSQTRALSSDSFGEEQSTTY) the composition is skewed to polar residues. A disordered region spans residues 79–133 (QSQTRALSSDSFGEEQSTTYLPEASGSVLKTPPEKETLTLGSRKEQLKTPSKGIS). Residues 110–125 (PPEKETLTLGSRKEQL) show a composition bias toward basic and acidic residues. 7 WD repeats span residues 229 to 266 (RNDY…GIEN), 271 to 310 (LTCN…RLRN), 311 to 341 (MLGH…YHHD), 353 to 392 (RHKQ…SAQG), 399 to 441 (TQST…SIQT), 443 to 484 (STNS…RSGG), and 487 to 519 (GHRG…WNCY).

This sequence belongs to the WD repeat CDC20/Fizzy family. Expressed in multiciliated cells (MCCs).

Its subcellular location is the cytoplasm. Its function is as follows. Protein regulator of centriole-deuterosome disengagement and subsequently participates in the ciliogenesis in multiciliated cells (MCCs). The protein is Cell division cycle protein 20 homolog B of Homo sapiens (Human).